A 1116-amino-acid chain; its full sequence is uncharacterized protein (1116 aa).

One copy of the BNR 1 repeat lies at 21–32 (FISRDGGLTWRF). N-linked (GlcNAc...) asparagine glycosylation is present at asparagine 35. BNR repeat units lie at residues 67–78 (YYSLDQGRTWNE) and 307–318 (YISHDGGQTIKR). An N-linked (GlcNAc...) asparagine glycan is attached at asparagine 336. Residues 404-415 (YLTKDGGETFTE) form a BNR 4 repeat. Asparagine 553 is a glycosylation site (N-linked (GlcNAc...) asparagine). BNR repeat units follow at residues 607-618 (KITFNDGSDWNF), 686-697 (FLTTDGGETWTE), and 727-738 (SYSTDFGKTWKD). Asparagine 846 carries N-linked (GlcNAc...) asparagine glycosylation. The helical transmembrane segment at 934-957 (INTGAYALVFVTILLVIFFAAWFV) threads the bilayer. An N-linked (GlcNAc...) asparagine glycan is attached at asparagine 985. A disordered region spans residues 1069-1116 (IEQEDAYRPEQEHTSQIDQPATSNIPDALPARSAIHKPDSTAVRNEDE). Residues 1073-1083 (DAYRPEQEHTS) are compositionally biased toward basic and acidic residues. The span at 1084–1093 (QIDQPATSNI) shows a compositional bias: polar residues.

The protein localises to the membrane. This is an uncharacterized protein from Saccharomyces cerevisiae (strain ATCC 204508 / S288c) (Baker's yeast).